Reading from the N-terminus, the 257-residue chain is Urease accessory protein UreD (257 aa).

This sequence belongs to the UreD family. UreD, UreF and UreG form a complex that acts as a GTP-hydrolysis-dependent molecular chaperone, activating the urease apoprotein by helping to assemble the nickel containing metallocenter of UreC. The UreE protein probably delivers the nickel.

Its subcellular location is the cytoplasm. Its function is as follows. Required for maturation of urease via the functional incorporation of the urease nickel metallocenter. The protein is Urease accessory protein UreD of Ruegeria pomeroyi (strain ATCC 700808 / DSM 15171 / DSS-3) (Silicibacter pomeroyi).